The sequence spans 299 residues: Tyrosine recombinase XerC (299 aa).

The Core-binding (CB) domain maps to Met-1–Asn-85. Residues Arg-106–Asp-285 form the Tyr recombinase domain. Residues Arg-146, Lys-170, His-237, Arg-240, and His-263 contribute to the active site. Tyr-272 (O-(3'-phospho-DNA)-tyrosine intermediate) is an active-site residue.

The protein belongs to the 'phage' integrase family. XerC subfamily. As to quaternary structure, forms a cyclic heterotetrameric complex composed of two molecules of XerC and two molecules of XerD.

Its subcellular location is the cytoplasm. Its function is as follows. Site-specific tyrosine recombinase, which acts by catalyzing the cutting and rejoining of the recombining DNA molecules. The XerC-XerD complex is essential to convert dimers of the bacterial chromosome into monomers to permit their segregation at cell division. It also contributes to the segregational stability of plasmids. This is Tyrosine recombinase XerC from Pseudomonas entomophila (strain L48).